The following is a 357-amino-acid chain: N-acetyl-gamma-glutamyl-phosphate reductase (357 aa).

Cysteine 160 is an active-site residue.

The protein belongs to the NAGSA dehydrogenase family. Type 1 subfamily.

The protein localises to the cytoplasm. The enzyme catalyses N-acetyl-L-glutamate 5-semialdehyde + phosphate + NADP(+) = N-acetyl-L-glutamyl 5-phosphate + NADPH + H(+). It functions in the pathway amino-acid biosynthesis; L-arginine biosynthesis; N(2)-acetyl-L-ornithine from L-glutamate: step 3/4. Functionally, catalyzes the NADPH-dependent reduction of N-acetyl-5-glutamyl phosphate to yield N-acetyl-L-glutamate 5-semialdehyde. This chain is N-acetyl-gamma-glutamyl-phosphate reductase, found in Synechococcus sp. (strain CC9605).